We begin with the raw amino-acid sequence, 328 residues long: Protoheme IX farnesyltransferase (328 aa).

Transmembrane regions (helical) follow at residues 31-51 (IILL…KGEV), 53-73 (LFLL…ANAI), 120-140 (VFAN…YVGV), 153-173 (IVIG…AVTG), 181-201 (LLFA…AIYI), 226-246 (IWVY…PLHV), 250-270 (IYAV…WQLL), and 285-305 (YSIY…LPFT).

Belongs to the UbiA prenyltransferase family. Protoheme IX farnesyltransferase subfamily.

It is found in the cell inner membrane. It catalyses the reaction heme b + (2E,6E)-farnesyl diphosphate + H2O = Fe(II)-heme o + diphosphate. It participates in porphyrin-containing compound metabolism; heme O biosynthesis; heme O from protoheme: step 1/1. Functionally, converts heme B (protoheme IX) to heme O by substitution of the vinyl group on carbon 2 of heme B porphyrin ring with a hydroxyethyl farnesyl side group. This is Protoheme IX farnesyltransferase from Trichodesmium erythraeum (strain IMS101).